The primary structure comprises 545 residues: Methionine--tRNA ligase (545 aa).

The 'HIGH' region signature appears at 10-20 (PYANGSLHIGH). 4 residues coordinate Zn(2+): cysteine 141, cysteine 144, cysteine 153, and cysteine 156. Positions 329-333 (KISTS) match the 'KMSKS' region motif. Threonine 332 provides a ligand contact to ATP.

Belongs to the class-I aminoacyl-tRNA synthetase family. MetG type 1 subfamily. As to quaternary structure, monomer. Zn(2+) is required as a cofactor.

Its subcellular location is the cytoplasm. It carries out the reaction tRNA(Met) + L-methionine + ATP = L-methionyl-tRNA(Met) + AMP + diphosphate. Functionally, is required not only for elongation of protein synthesis but also for the initiation of all mRNA translation through initiator tRNA(fMet) aminoacylation. This chain is Methionine--tRNA ligase, found in Streptococcus pneumoniae (strain 70585).